The primary structure comprises 444 residues: Chromosome partition protein MukF (444 aa).

Residues 212–240 form a leucine-zipper region; the sequence is LDETSGNLRELQDTLNAAGDKLQAQLLRI.

It belongs to the MukF family. In terms of assembly, interacts, and probably forms a ternary complex, with MukE and MukB via its C-terminal region. The complex formation is stimulated by calcium or magnesium. It is required for an interaction between MukE and MukB.

It localises to the cytoplasm. It is found in the nucleoid. In terms of biological role, involved in chromosome condensation, segregation and cell cycle progression. May participate in facilitating chromosome segregation by condensation DNA from both sides of a centrally located replisome during cell division. Not required for mini-F plasmid partitioning. Probably acts via its interaction with MukB and MukE. Overexpression results in anucleate cells. It has a calcium binding activity. The polypeptide is Chromosome partition protein MukF (Haemophilus influenzae (strain ATCC 51907 / DSM 11121 / KW20 / Rd)).